The following is a 140-amino-acid chain: HTH-type transcriptional regulator LysM (140 aa).

One can recognise an HTH asnC-type domain in the interval 4-67 (VDESDLKILE…ELENEIRAIV (64 aa)). A DNA-binding region (H-T-H motif) is located at residues 23–42 (YTSIAKELKISEAAVRKRIE).

As to quaternary structure, homotetramer.

The protein localises to the cytoplasm. It participates in amino-acid biosynthesis; L-lysine biosynthesis via AAA pathway [regulation]. Its function is as follows. In the absence or at low concentrations of lysine, activates the biosynthesis of this amino acid via the alpha-aminoadipate (AAA) pathway. The polypeptide is HTH-type transcriptional regulator LysM (lysM) (Sulfurisphaera tokodaii (strain DSM 16993 / JCM 10545 / NBRC 100140 / 7) (Sulfolobus tokodaii)).